We begin with the raw amino-acid sequence, 462 residues long: ATP synthase subunit beta (462 aa).

152–159 is an ATP binding site; that stretch reads GGAGVGKT.

It belongs to the ATPase alpha/beta chains family. As to quaternary structure, F-type ATPases have 2 components, CF(1) - the catalytic core - and CF(0) - the membrane proton channel. CF(1) has five subunits: alpha(3), beta(3), gamma(1), delta(1), epsilon(1). CF(0) has three main subunits: a(1), b(2) and c(9-12). The alpha and beta chains form an alternating ring which encloses part of the gamma chain. CF(1) is attached to CF(0) by a central stalk formed by the gamma and epsilon chains, while a peripheral stalk is formed by the delta and b chains.

The protein localises to the cell inner membrane. The enzyme catalyses ATP + H2O + 4 H(+)(in) = ADP + phosphate + 5 H(+)(out). Its function is as follows. Produces ATP from ADP in the presence of a proton gradient across the membrane. The catalytic sites are hosted primarily by the beta subunits. The polypeptide is ATP synthase subunit beta (Shewanella amazonensis (strain ATCC BAA-1098 / SB2B)).